We begin with the raw amino-acid sequence, 135 residues long: Large ribosomal subunit protein uL16c (135 aa).

The protein belongs to the universal ribosomal protein uL16 family. In terms of assembly, part of the 50S ribosomal subunit.

The protein localises to the plastid. Its subcellular location is the chloroplast. This chain is Large ribosomal subunit protein uL16c, found in Populus alba (White poplar).